Here is an 83-residue protein sequence, read N- to C-terminus: MASTRLFVLLVIGTVLLCQVSGFLDELLAEHELPQDMTKRGCRNAYSSAICGKVITADDCMRKSSSRMGSFARKKCQRLCGIC.

A signal peptide spans 1-19 (MASTRLFVLLVIGTVLLCQ). The propeptide occupies 20-38 (VSGFLDELLAEHELPQDMT).

Belongs to the sea anemone 8 toxin family.

The protein resides in the secreted. Its subcellular location is the nematocyst. The polypeptide is U-actitoxin-Avd8d (Anemonia viridis (Snakelocks anemone)).